The sequence spans 153 residues: uncharacterized protein (153 aa).

A disordered region spans residues 19 to 46 (EKSTRLEEDAMESEPLAGTKTRGRGRRR).

This is an uncharacterized protein from Homo sapiens (Human).